Reading from the N-terminus, the 620-residue chain is Cilia- and flagella-associated protein 52 (620 aa).

WD repeat units follow at residues 62–106 (GHGN…LLAR), 109–150 (LHKG…AICG), 156–195 (LNVG…RKIW), 288–327 (QLQG…ETLI), 330–369 (CHFD…ELLR), 372–411 (VPNM…LMYV), 415–454 (AHRI…QKLE), 459–498 (EHKS…RNQM), 500–539 (LANT…VIRE), 543–582 (SLSG…VTHV), and 585–620 (GHSG…PYTS).

This sequence belongs to the CFAP52 family. As to quaternary structure, microtubule inner protein component of sperm flagellar doublet microtubules. Interacts with BRCA2. Interacts with the CCT chaperonin complex. Interacts with HSP70. Interacts with AK8. Interacts with CFAP45. Interacts with DNAI1. Interacts with IQDC. As to expression, expressed in respiratory cells and sperm (at protein level). Highly expressed in testis. Up-regulated in hepatocellular carcinoma (HCC).

Its subcellular location is the cytoplasm. It localises to the cytoskeleton. The protein localises to the cilium axoneme. It is found in the flagellum axoneme. Microtubule inner protein (MIP) part of the dynein-decorated doublet microtubules (DMTs) in cilia axoneme. Important for proper ciliary and flagellar beating. May act in cooperation with CFAP45 and axonemal dynein subunit DNAH11. May play a role in cell growth and/or survival. This chain is Cilia- and flagella-associated protein 52, found in Homo sapiens (Human).